The following is a 447-amino-acid chain: UPF0210 protein LSL_0162 (447 aa).

It belongs to the UPF0210 family. As to quaternary structure, homodimer.

This chain is UPF0210 protein LSL_0162, found in Ligilactobacillus salivarius (strain UCC118) (Lactobacillus salivarius).